Here is a 296-residue protein sequence, read N- to C-terminus: Cytidine deaminase (296 aa).

2 CMP/dCMP-type deaminase domains span residues 48-168 and 187-296; these read DADA…FGPV and QNMN…FIEE. Position 89-91 (89-91) interacts with substrate; that stretch reads NME. Position 102 (His102) interacts with Zn(2+). The active-site Proton donor is Glu104. Positions 129 and 132 each coordinate Zn(2+).

Belongs to the cytidine and deoxycytidylate deaminase family. As to quaternary structure, homodimer. Zn(2+) is required as a cofactor.

The enzyme catalyses cytidine + H2O + H(+) = uridine + NH4(+). It catalyses the reaction 2'-deoxycytidine + H2O + H(+) = 2'-deoxyuridine + NH4(+). In terms of biological role, this enzyme scavenges exogenous and endogenous cytidine and 2'-deoxycytidine for UMP synthesis. The sequence is that of Cytidine deaminase from Pectobacterium carotovorum subsp. carotovorum (strain PC1).